A 225-amino-acid chain; its full sequence is Uracil-DNA glycosylase (225 aa).

D65 (proton acceptor) is an active-site residue.

Belongs to the uracil-DNA glycosylase (UDG) superfamily. UNG family.

It localises to the cytoplasm. The catalysed reaction is Hydrolyzes single-stranded DNA or mismatched double-stranded DNA and polynucleotides, releasing free uracil.. Excises uracil residues from the DNA which can arise as a result of misincorporation of dUMP residues by DNA polymerase or due to deamination of cytosine. In Bacillus cereus (strain ATCC 10987 / NRS 248), this protein is Uracil-DNA glycosylase.